The primary structure comprises 168 residues: Small ribosomal subunit protein uS5 (168 aa).

Positions 14 to 77 constitute an S5 DRBM domain; that stretch reads FEERVVSINR…EAAKKNLITV (64 aa).

Belongs to the universal ribosomal protein uS5 family. Part of the 30S ribosomal subunit. Contacts proteins S4 and S8.

Functionally, with S4 and S12 plays an important role in translational accuracy. Its function is as follows. Located at the back of the 30S subunit body where it stabilizes the conformation of the head with respect to the body. This is Small ribosomal subunit protein uS5 from Lactococcus lactis subsp. lactis (strain IL1403) (Streptococcus lactis).